A 646-amino-acid polypeptide reads, in one-letter code: Major capsid protein (646 aa).

Belongs to the NCLDV major capsid protein family. Homotrimer. The membrane-bound form, but not the cytosolic one, assembles into large complexes. Interacts with the minor capsid proteins M1249L and p17; these interactions form a rigid zipper structure that stabilizes the capsomers.

The protein resides in the virion. The protein localises to the host endoplasmic reticulum membrane. It localises to the host cytoplasm. It is found in the host cytosol. Functionally, capsid protein that self-assembles to form the pseudo-hexameric capsomers of the icosahedral capsid. The capsid is constructed of 2760 pseudo-hexameric capsomers and 12 pentameric capsomers, with a T=277 symmetry, about 200 nm in diameter. The capsid encapsulates the DNA-containing nucleoid, the core shell and the inner membrane. Plays an essential role in virion assembly. Involved in virus attachment to the host cell. In African swine fever virus (isolate Pig/Kenya/KEN-50/1950) (ASFV), this protein is Major capsid protein.